Here is a 241-residue protein sequence, read N- to C-terminus: Ribosome-inactivating protein luffaculin 1 (241 aa).

N-linked (GlcNAc...) asparagine glycans are attached at residues N28, N33, N77, and N84. E159 is an active-site residue. The N-linked (GlcNAc...) asparagine glycan is linked to N205.

Belongs to the ribosome-inactivating protein family. Type 1 RIP subfamily.

The catalysed reaction is Endohydrolysis of the N-glycosidic bond at one specific adenosine on the 28S rRNA.. The protein is Ribosome-inactivating protein luffaculin 1 of Luffa acutangula (Ridged gourd).